Here is a 117-residue protein sequence, read N- to C-terminus: Large ribosomal subunit protein bL20 (117 aa).

It belongs to the bacterial ribosomal protein bL20 family.

Functionally, binds directly to 23S ribosomal RNA and is necessary for the in vitro assembly process of the 50S ribosomal subunit. It is not involved in the protein synthesizing functions of that subunit. This chain is Large ribosomal subunit protein bL20 (rplT), found in Rickettsia prowazekii (strain Madrid E).